A 62-amino-acid polypeptide reads, in one-letter code: Short neurotoxin 1 (62 aa).

A compositionally biased stretch (polar residues) spans 1-17 (MQCCNQQSSQPKTTTTC). The tract at residues 1 to 20 (MQCCNQQSSQPKTTTTCPGG) is disordered. 4 disulfides stabilise this stretch: cysteine 3–cysteine 24, cysteine 17–cysteine 41, cysteine 43–cysteine 54, and cysteine 55–cysteine 60.

It belongs to the three-finger toxin family. Short-chain subfamily. Type I alpha-neurotoxin sub-subfamily. As to expression, expressed by the venom gland.

It localises to the secreted. Functionally, binds to muscle nicotinic acetylcholine receptor (nAChR) and inhibit acetylcholine from binding to the receptor, thereby impairing neuromuscular transmission. This chain is Short neurotoxin 1, found in Acanthophis antarcticus (Common death adder).